Here is a 159-residue protein sequence, read N- to C-terminus: Small ribosomal subunit protein uS4 (159 aa).

The S4 RNA-binding domain maps to 106–158 (RRLQTIVYRMGLAKSIHHARQLIVHGHVAVAGRRVTSPGFLVPRELEDKISLI).

It belongs to the universal ribosomal protein uS4 family. Part of the 30S ribosomal subunit. Contacts protein S5. The interaction surface between S4 and S5 is involved in control of translational fidelity.

Functionally, one of the primary rRNA binding proteins, it binds directly to 16S rRNA where it nucleates assembly of the body of the 30S subunit. With S5 and S12 plays an important role in translational accuracy. This is Small ribosomal subunit protein uS4 from Pyrobaculum aerophilum (strain ATCC 51768 / DSM 7523 / JCM 9630 / CIP 104966 / NBRC 100827 / IM2).